Reading from the N-terminus, the 445-residue chain is MKPVIALVGRPNVGKSTLFNRLTRSRDALVADLPGLTRDRHYGEGRVGERPYLVVDTGGFEPVAKDGILHEMARQTRQAVEEADVVVFIVDGRNGLAPQDKSIADYLRKTGRPIFLVVNKAEGMKYTAVATDFYELGLGDPRAISAAHGDGVTDMINEALEVAYAGQPEEADEDDPSRGIKIAIVGRPNVGKSTLVNALIGEDRVIAFDMPGTTRDSIYVDFERNGKKYTLIDTAGLRRRGKVFEAIEKFSVVKTLQSISDANVVILLLDAQQDISDQDAHIAGFVVEQGRALVIGVNKWDGLDDHARDRAKADLTRKLKFLDFAKSHFISAAKKTGIGALMRSVDDAYAAAMAKLPTPKLTRALIEAVEFQQPRRRGPVRPKLRYAHQGGQNPPIIVIHGNALDAVTETYKRYLENRFRETFSLTGTPLRIEFRSSNNPYADKG.

2 EngA-type G domains span residues 3-167 and 180-353; these read PVIA…YAGQ and IKIA…AAAM. GTP is bound by residues 9-16, 56-60, 119-122, 186-193, 233-237, and 298-301; these read GRPNVGKS, DTGGF, NKAE, DTAGL, and NKWD. The KH-like domain maps to 354–438; that stretch reads AKLPTPKLTR…PLRIEFRSSN (85 aa).

It belongs to the TRAFAC class TrmE-Era-EngA-EngB-Septin-like GTPase superfamily. EngA (Der) GTPase family. In terms of assembly, associates with the 50S ribosomal subunit.

Functionally, GTPase that plays an essential role in the late steps of ribosome biogenesis. This Burkholderia cenocepacia (strain HI2424) protein is GTPase Der.